Here is a 202-residue protein sequence, read N- to C-terminus: ATP-dependent Clp protease proteolytic subunit (202 aa).

S106 (nucleophile) is an active-site residue. The active site involves H131.

It belongs to the peptidase S14 family. In terms of assembly, fourteen ClpP subunits assemble into 2 heptameric rings which stack back to back to give a disk-like structure with a central cavity, resembling the structure of eukaryotic proteasomes.

The protein resides in the cytoplasm. It catalyses the reaction Hydrolysis of proteins to small peptides in the presence of ATP and magnesium. alpha-casein is the usual test substrate. In the absence of ATP, only oligopeptides shorter than five residues are hydrolyzed (such as succinyl-Leu-Tyr-|-NHMec, and Leu-Tyr-Leu-|-Tyr-Trp, in which cleavage of the -Tyr-|-Leu- and -Tyr-|-Trp bonds also occurs).. Functionally, cleaves peptides in various proteins in a process that requires ATP hydrolysis. Has a chymotrypsin-like activity. Plays a major role in the degradation of misfolded proteins. The polypeptide is ATP-dependent Clp protease proteolytic subunit (Acidovorax ebreus (strain TPSY) (Diaphorobacter sp. (strain TPSY))).